The primary structure comprises 1699 residues: Hybrid signal transduction histidine kinase E (1699 aa).

Disordered regions lie at residues 1–32 (MDKL…NLEN) and 58–97 (NNII…NPNV). A compositionally biased stretch (low complexity) spans 7–32 (NNNLSPPSSPSSSTTTPNLSSTNLEN). The next 6 membrane-spanning stretches (helical) occupy residues 142 to 162 (CILL…LIFL), 164 to 184 (SFYP…IVST), 191 to 211 (LVAL…FLQI), 238 to 258 (LNFL…IFFP), 262 to 282 (FSIT…LISI), and 295 to 315 (NLIV…ILSI). Polar residues predominate over residues 412-432 (ITNGGNNKQTSTTSANSTPRY). Disordered regions lie at residues 412-439 (ITNG…NNNN) and 542-593 (LLNN…NISN). Residues 544 to 593 (NNNNNNNNNNNNNNNNNNNNNNNNNNSNNNNNNNSNNNNNNNNINNNISN) are compositionally biased toward low complexity. In terms of domain architecture, Histidine kinase spans 678–950 (TVSHEVRTPI…AFSFTSILST (273 aa)). A Phosphohistidine; by autocatalysis modification is found at His-681. 5 disordered regions span residues 819-866 (NNNN…NNNN), 1018-1054 (NNNN…NDNN), 1186-1239 (KKQQ…RKSS), 1252-1294 (MVQV…NPNN), and 1351-1406 (SIPI…SPPP). Residues 1198 to 1212 (MGDTLSSTKSPQYTN) are compositionally biased toward polar residues. The segment covering 1219–1239 (SSSSNGSLNKSNRSNLLRKSS) has biased composition (low complexity). Polar residues predominate over residues 1271 to 1282 (KGNNSNPNSTEL). 2 stretches are compositionally biased toward low complexity: residues 1283–1294 (NSTNSVNGNPNN) and 1355–1392 (NINN…NNNN). Residues 1575 to 1695 (NALIVDDTEL…TLKDTLLKWG (121 aa)) enclose the Response regulatory domain. Asp-1625 carries the 4-aspartylphosphate modification.

Its subcellular location is the membrane. The catalysed reaction is ATP + protein L-histidine = ADP + protein N-phospho-L-histidine.. Its function is as follows. May act in a signal transduction pathway. This protein undergoes an ATP-dependent autophosphorylation at a conserved histidine residue in the kinase core, and a phosphoryl group is then transferred to a conserved aspartate residue in the receiver domain. In Dictyostelium discoideum (Social amoeba), this protein is Hybrid signal transduction histidine kinase E (dhkE).